A 459-amino-acid polypeptide reads, in one-letter code: MMISEDISEPSSPDTPFDDSDLLNSSMTDDVSAQLAASGPIGVRAAAAIATGKKRKRPHSFETNPSIRRRQQTRLIRKLKATIDEYATRVGQQAVVLTCTPGKHDGNFKVFGAAPLENIMRNLKGIVLQDLDNALAQRAPQPSNENSDLYELPPLVIDGIPTSVNKMTQAQLRAFIPLMLKYSTGRGKPGWGKESCRPVWWPSDLPWANVRSDVRSEDEKRKVSWTHALVTIVINCYKHHGRDDLLPEFIEDKCKEIEASQNQVASLPTATLLPSHAVVHTINNPDGTVSLIQVDTGATVATLADVTQVQQLTNLQTLQQVRLQPLQIQHALGNQQAEATQAVQTLAEVAAAQGGDGELTEGQTVTTLPEGTQLVLASDGSLQAINDGTAQGIVIPASVYQTVVAGDGQPIQIANVNIAQQSGGGTTMAAIKNAVMQSQPIPSQVATLVVNAASHDQHT.

Residues 1 to 25 form a disordered region; the sequence is MMISEDISEPSSPDTPFDDSDLLNS.

It belongs to the NRF1/Ewg family.

The protein localises to the nucleus. Transcriptional regulator that interacts with specific sites in the control region of the cyIIIa actin gene. Also binds specifically to similar target sites located in the regulatory region of the SM50 gene. The chain is DNA-binding protein P3A2 from Strongylocentrotus purpuratus (Purple sea urchin).